We begin with the raw amino-acid sequence, 98 residues long: DNA-binding protein Fis (98 aa).

The segment at residues 74 to 93 is a DNA-binding region (H-T-H motif); that stretch reads QTRAAVMMGINRGTLRKKLK.

It belongs to the transcriptional regulatory Fis family. As to quaternary structure, homodimer.

In terms of biological role, activates ribosomal RNA transcription. Plays a direct role in upstream activation of rRNA promoters. The chain is DNA-binding protein Fis from Aeromonas hydrophila subsp. hydrophila (strain ATCC 7966 / DSM 30187 / BCRC 13018 / CCUG 14551 / JCM 1027 / KCTC 2358 / NCIMB 9240 / NCTC 8049).